Here is a 1820-residue protein sequence, read N- to C-terminus: uncharacterized protein (1820 aa).

9 disordered regions span residues 1–73 (MQWT…TLSG), 86–158 (TTTT…VRSA), 226–260 (GSSG…NNNY), 286–366 (EERA…QETE), 453–497 (DVQD…RNLS), 519–548 (LSSI…TDTA), 577–597 (GNSS…PPTP), 619–689 (GAGT…TASG), and 735–830 (HSHN…TPSS). Residues 20–31 (NRNSIEQRTPAN) show a composition bias toward polar residues. Low complexity predominate over residues 86–128 (TTTTTIIESSSSTNTTLEKNSPSPAGGSCSSGSGSLSPAYLQH). A compositionally biased stretch (basic residues) spans 129 to 146 (HLQHHGSPLHHLQVHHHT). Residues 247–259 (SNSSNCSSQFNNN) are compositionally biased toward low complexity. A coiled-coil region spans residues 265-308 (VDSLDDMLRKLTELEQRVIEAEERAEEAEDKVRAMEQRLSEWPK). A compositionally biased stretch (basic and acidic residues) spans 294-305 (DKVRAMEQRLSE). Over residues 346–358 (ASGGATAGAAGSG) the composition is skewed to low complexity. The stretch at 362–438 (TQETEKTITS…LKNHIANQSQ (77 aa)) forms a coiled coil. Polar residues predominate over residues 453-463 (DVQDFTGSGSN). Phosphoserine is present on residues S542 and S543. A compositionally biased stretch (low complexity) spans 623 to 632 (GTSTAESTAS). Positions 655–669 (HGSGTGIGTGDGHGT) are enriched in gly residues. Positions 738-769 (NSSSTDNTETSTSGSASSPSKSLKTSSSLSPA) are enriched in low complexity. Positions 787-818 (QSRTSTTPSSRINQHLQPSQHQHHTLSNQNHG) are enriched in polar residues. 2 PH domains span residues 909-1003 (SLEK…NVQR) and 1017-1124 (KPTV…VVSG). Residues S1073, S1075, and S1077 each carry the phosphoserine modification. The MyTH4 domain occupies 1159 to 1378 (HTKDTITAPL…PSRMEVLSIL (220 aa)). One can recognise an FERM domain in the interval 1389 to 1712 (HAIPVHMMNS…DYMNALGHTV (324 aa)). Disordered regions lie at residues 1713–1748 (PGTP…ATGF) and 1764–1820 (ATHT…QRIK). The span at 1714–1724 (GTPQMNSLTRN) shows a compositional bias: polar residues. Low complexity predominate over residues 1764–1781 (ATHTLNSNHSHTLSSSHH). The segment covering 1805–1820 (HQPDILKSTPDHQRIK) has biased composition (basic and acidic residues).

This is an uncharacterized protein from Drosophila melanogaster (Fruit fly).